Reading from the N-terminus, the 158-residue chain is Sporulation-delaying protein SdpA (158 aa).

The protein resides in the cytoplasm. Required for the maturation of SdpC to SDP. Not required for SdpC signal peptide cleavage, secretion from the cell or disulfide bond formation. The sequence is that of Sporulation-delaying protein SdpA from Bacillus subtilis (strain 168).